Consider the following 147-residue polypeptide: MALKRIQKELQDLGRDPPAQCSAGPVGDDLFHWQATIMGPPESPYQGGVFFLTIHFPTDYPFKPPKVAFTTRIYHPNINSNGSICLDILRSQWSPALTISKVLLSICSLLCDPNPDDPLVPEIARIYKTDRERYNQLAREWTQKYAM.

A UBC core domain is found at 1–147; it reads MALKRIQKEL…AREWTQKYAM (147 aa). Residue Cys-85 is the Glycyl thioester intermediate of the active site.

This sequence belongs to the ubiquitin-conjugating enzyme family. Interacts with the brc-1-brd-1 heterodimer following ionizing irradiation. As to expression, expressed in the nervous system.

It localises to the nucleus. The protein resides in the chromosome. It is found in the cytoplasm. The enzyme catalyses S-ubiquitinyl-[E1 ubiquitin-activating enzyme]-L-cysteine + [E2 ubiquitin-conjugating enzyme]-L-cysteine = [E1 ubiquitin-activating enzyme]-L-cysteine + S-ubiquitinyl-[E2 ubiquitin-conjugating enzyme]-L-cysteine.. It functions in the pathway protein modification; protein ubiquitination. In terms of biological role, catalyzes the covalent attachment of ubiquitin to other proteins. Mediates the selective degradation of short-lived and abnormal proteins. Plays a role in the DNA damage response. In particular, in response to ionizing radiation, associates with the E3 ubiquitin-protein ligase brc-1-brd-1 heterodimer on chromatin to activate E3-ubiquitin ligase activity of the heterodimer, and thus its DNA damage repair mechanisms. Required, cell autonomously, for death of the linker cell, a male-specific cell which guides the elongation of the gonad; perhaps acting as part of the ubiquitin proteasome system (UPS) and modulated by heat shock transcription factor hsf-1. This is Ubiquitin-conjugating enzyme E2 2 from Caenorhabditis elegans.